The primary structure comprises 131 residues: Profilin (131 aa).

It belongs to the profilin family. As to quaternary structure, occurs in many kinds of cells as a complex with monomeric actin in a 1:1 ratio.

Its subcellular location is the cytoplasm. The protein localises to the cytoskeleton. Its function is as follows. Binds to actin and affects the structure of the cytoskeleton. At high concentrations, profilin prevents the polymerization of actin, whereas it enhances it at low concentrations. By binding to PIP2, it inhibits the formation of IP3 and DG. This chain is Profilin, found in Pyrus communis (Pear).